A 408-amino-acid polypeptide reads, in one-letter code: NADH-quinone oxidoreductase subunit H (408 aa).

The next 9 membrane-spanning stretches (helical) occupy residues 18–38, 84–104, 124–144, 165–185, 198–218, 261–281, 288–308, 321–341, and 353–373; these read LAKA…AILI, PIYL…FSVI, LPVA…GIVL, VVSY…YAGT, TWFV…MVGE, SALA…FNLI, WWPL…YFWL, MALG…VVAI, and WAAW…WGLA. Positions 381–408 are disordered; sequence VQPPPPQSTGAYPVPPLPSVGTKETADA. The span at 382 to 398 shows a compositional bias: pro residues; sequence QPPPPQSTGAYPVPPLP.

It belongs to the complex I subunit 1 family. As to quaternary structure, NDH-1 is composed of 14 different subunits. Subunits NuoA, H, J, K, L, M, N constitute the membrane sector of the complex.

The protein localises to the cell membrane. The enzyme catalyses a quinone + NADH + 5 H(+)(in) = a quinol + NAD(+) + 4 H(+)(out). Its function is as follows. NDH-1 shuttles electrons from NADH, via FMN and iron-sulfur (Fe-S) centers, to quinones in the respiratory chain. The immediate electron acceptor for the enzyme in this species is believed to be menaquinone. Couples the redox reaction to proton translocation (for every two electrons transferred, four hydrogen ions are translocated across the cytoplasmic membrane), and thus conserves the redox energy in a proton gradient. This subunit may bind ubiquinone. The sequence is that of NADH-quinone oxidoreductase subunit H from Mycolicibacterium smegmatis (strain ATCC 700084 / mc(2)155) (Mycobacterium smegmatis).